We begin with the raw amino-acid sequence, 191 residues long: Fe/S biogenesis protein NfuA (191 aa).

[4Fe-4S] cluster-binding residues include Cys149 and Cys152.

This sequence belongs to the NfuA family. Homodimer. The cofactor is [4Fe-4S] cluster.

Involved in iron-sulfur cluster biogenesis. Binds a 4Fe-4S cluster, can transfer this cluster to apoproteins, and thereby intervenes in the maturation of Fe/S proteins. Could also act as a scaffold/chaperone for damaged Fe/S proteins. In Klebsiella pneumoniae (strain 342), this protein is Fe/S biogenesis protein NfuA.